A 419-amino-acid polypeptide reads, in one-letter code: L-rhamnose isomerase (419 aa).

Residues histidine 262, aspartate 294, and aspartate 296 each contribute to the Mn(2+) site.

The protein belongs to the rhamnose isomerase family. In terms of assembly, homotetramer. The cofactor is Mn(2+).

The protein localises to the cytoplasm. It catalyses the reaction L-rhamnopyranose = L-rhamnulose. Its pathway is carbohydrate degradation; L-rhamnose degradation; glycerone phosphate from L-rhamnose: step 1/3. Its function is as follows. Catalyzes the interconversion of L-rhamnose and L-rhamnulose. The sequence is that of L-rhamnose isomerase from Escherichia fergusonii (strain ATCC 35469 / DSM 13698 / CCUG 18766 / IAM 14443 / JCM 21226 / LMG 7866 / NBRC 102419 / NCTC 12128 / CDC 0568-73).